A 735-amino-acid chain; its full sequence is 1,4-alpha-glucan branching enzyme GlgB 1 (735 aa).

Asp-418 (nucleophile) is an active-site residue. Catalysis depends on Glu-471, which acts as the Proton donor.

It belongs to the glycosyl hydrolase 13 family. GlgB subfamily. In terms of assembly, monomer.

The enzyme catalyses Transfers a segment of a (1-&gt;4)-alpha-D-glucan chain to a primary hydroxy group in a similar glucan chain.. It participates in glycan biosynthesis; glycogen biosynthesis. In terms of biological role, catalyzes the formation of the alpha-1,6-glucosidic linkages in glycogen by scission of a 1,4-alpha-linked oligosaccharide from growing alpha-1,4-glucan chains and the subsequent attachment of the oligosaccharide to the alpha-1,6 position. The sequence is that of 1,4-alpha-glucan branching enzyme GlgB 1 from Rhizobium johnstonii (strain DSM 114642 / LMG 32736 / 3841) (Rhizobium leguminosarum bv. viciae).